Here is a 392-residue protein sequence, read N- to C-terminus: BURP domain protein RD22 (392 aa).

An N-terminal signal peptide occupies residues 1-22 (MAIRLPLICLLGSFMVVAIAAD). 4 TXV repeats span residues 56–58 (TNV), 78–80 (TAV), 100–102 (THV), and 125–127 (TDV). Positions 57 to 164 (NVQVGKGGVN…PFVYNYAAKE (108 aa)) are 5 X approximate repeats. The interval 61–136 (GKGGVNVNTH…VGVGKGGVTV (76 aa)) is disordered. Gly residues predominate over residues 94 to 114 (GKPGGGTHVSVGSGKGHGGGV). The 217-residue stretch at 176–392 (FFLEKDLVRG…PETHVVWFSY (217 aa)) folds into the BURP domain.

Expressed in seed. Highest expression in leaves and guard cells.

Functionally, acts to suppress chlorophyll degradation under moisture stress. In Arabidopsis thaliana (Mouse-ear cress), this protein is BURP domain protein RD22.